Consider the following 101-residue polypeptide: DNA-binding protein Fis (101 aa).

The segment at residues 77 to 96 (QTRAANMLGINRGTLRKKLK) is a DNA-binding region (H-T-H motif).

The protein belongs to the transcriptional regulatory Fis family. As to quaternary structure, homodimer.

Its function is as follows. Activates ribosomal RNA transcription. Plays a direct role in upstream activation of rRNA promoters. This chain is DNA-binding protein Fis, found in Shewanella amazonensis (strain ATCC BAA-1098 / SB2B).